The chain runs to 160 residues: Ribosomal RNA large subunit methyltransferase H (160 aa).

Residues 44-63 (LPESRASNSATRKREEAVQI) are disordered. S-adenosyl-L-methionine is bound by residues Leu76, Gly108, and 127–132 (LGKMTW).

This sequence belongs to the RNA methyltransferase RlmH family. In terms of assembly, homodimer.

It localises to the cytoplasm. The enzyme catalyses pseudouridine(1915) in 23S rRNA + S-adenosyl-L-methionine = N(3)-methylpseudouridine(1915) in 23S rRNA + S-adenosyl-L-homocysteine + H(+). Functionally, specifically methylates the pseudouridine at position 1915 (m3Psi1915) in 23S rRNA. This Allorhizobium ampelinum (strain ATCC BAA-846 / DSM 112012 / S4) (Agrobacterium vitis (strain S4)) protein is Ribosomal RNA large subunit methyltransferase H.